Consider the following 192-residue polypeptide: MVRAGAVGTHLPTSSLDIFGDLRKMNKRQLYYQVLNFAMIVSSALMIWKGLIVLTGSESPIVVVLSGSMEPAFHRGDLLFLTNFREDPIRAGEIVVFKVEGRDIPIVHRVIKVHEKDNGDIKFLTKGDNNEVDDRGLYKEGQNWLEKKDVVGRARGFLPYVGMVTIIMNDYPKFKYALLAVMGAYVLLKRES.

At 1 to 28 (MVRAGAVGTHLPTSSLDIFGDLRKMNKR) the chain is on the cytoplasmic side. A helical; Signal-anchor for type II membrane protein membrane pass occupies residues 29–48 (QLYYQVLNFAMIVSSALMIW). Residues 49 to 192 (KGLIVLTGSE…GAYVLLKRES (144 aa)) lie on the Lumenal side of the membrane. Active-site charge relay system residues include Ser-68, His-108, and Asp-134. The interval 177–188 (ALLAVMGAYVLL) is C-terminal short (CTS) helix.

The protein belongs to the peptidase S26B family. As to quaternary structure, component of the signal peptidase complex paralog C (SPC-C) composed of a catalytic subunit SEC11C and three accessory subunits SPCS1, SPCS2 and SPCS3. Within the complex, interacts with SPCS2 and SPCS3. The complex induces a local thinning of the ER membrane which is used to measure the length of the signal peptide (SP) h-region of protein substrates. This ensures the selectivity of the complex towards h-regions shorter than 18-20 amino acids. May undergo processing at the N-terminus.

Its subcellular location is the endoplasmic reticulum membrane. It carries out the reaction Cleavage of hydrophobic, N-terminal signal or leader sequences from secreted and periplasmic proteins.. Catalytic component of the signal peptidase complex (SPC) which catalyzes the cleavage of N-terminal signal sequences from nascent proteins as they are translocated into the lumen of the endoplasmic reticulum. Specifically cleaves N-terminal signal peptides that contain a hydrophobic alpha-helix (h-region) shorter than 18-20 amino acids. This is Signal peptidase complex catalytic subunit SEC11C (Sec11c) from Mus musculus (Mouse).